The chain runs to 335 residues: Succinylglutamate desuccinylase (335 aa).

Residues histidine 59, glutamate 62, and histidine 151 each coordinate Zn(2+). Residue glutamate 215 is part of the active site.

The protein belongs to the AspA/AstE family. Succinylglutamate desuccinylase subfamily. It depends on Zn(2+) as a cofactor.

It carries out the reaction N-succinyl-L-glutamate + H2O = L-glutamate + succinate. The protein operates within amino-acid degradation; L-arginine degradation via AST pathway; L-glutamate and succinate from L-arginine: step 5/5. Its function is as follows. Transforms N(2)-succinylglutamate into succinate and glutamate. In Pseudomonas syringae pv. tomato (strain ATCC BAA-871 / DC3000), this protein is Succinylglutamate desuccinylase.